We begin with the raw amino-acid sequence, 365 residues long: Nudix hydrolase 24, chloroplastic (365 aa).

Residues 1-30 (MASAFCSLCPTPTSLFSSHALIPTLQWRSS) constitute a chloroplast transit peptide. The 142-residue stretch at 196–337 (GYAIHVNGYV…KDSCSLVIID (142 aa)) folds into the Nudix hydrolase domain. The Nudix box signature appears at 235–256 (GGLPHGISVCENLVKECEEEAG). Mg(2+)-binding residues include Glu250 and Glu254.

It belongs to the Nudix hydrolase family. Mg(2+) serves as cofactor. It depends on Mn(2+) as a cofactor. Expressed in leaves.

It localises to the plastid. Its subcellular location is the chloroplast. Functionally, probably mediates the hydrolysis of some nucleoside diphosphate derivatives. The chain is Nudix hydrolase 24, chloroplastic (NUDT24) from Arabidopsis thaliana (Mouse-ear cress).